Reading from the N-terminus, the 148-residue chain is Nucleoside diphosphate kinase B (148 aa).

The ATP site is built by lysine 9, phenylalanine 57, arginine 85, threonine 91, arginine 102, and asparagine 112. The Pros-phosphohistidine intermediate role is filled by histidine 115.

Belongs to the NDK family. The cofactor is Mg(2+).

It catalyses the reaction a 2'-deoxyribonucleoside 5'-diphosphate + ATP = a 2'-deoxyribonucleoside 5'-triphosphate + ADP. The enzyme catalyses a ribonucleoside 5'-diphosphate + ATP = a ribonucleoside 5'-triphosphate + ADP. Its function is as follows. Major role in the synthesis of nucleoside triphosphates other than ATP. The ATP gamma phosphate is transferred to the NDP beta phosphate via a ping-pong mechanism, using a phosphorylated active-site intermediate. The chain is Nucleoside diphosphate kinase B from Flaveria bidentis (Coastal plain yellowtops).